The sequence spans 257 residues: uncharacterized protein (257 aa).

7 N-linked (GlcNAc...) asparagine; by host glycosylation sites follow: asparagine 61, asparagine 95, asparagine 102, asparagine 111, asparagine 139, asparagine 148, and asparagine 152. The helical transmembrane segment at 233–253 threads the bilayer; sequence WYIIGGIFWVIVLIILVIFII.

The protein localises to the host membrane. It is found in the virion. This is an uncharacterized protein from Acanthamoeba polyphaga (Amoeba).